A 200-amino-acid chain; its full sequence is Small ribosomal subunit protein uS4 (200 aa).

A compositionally biased stretch (basic residues) spans 1–13; that stretch reads MARYRGPKQKIAR. The segment at 1–44 is disordered; that stretch reads MARYRGPKQKIARRFKEPIFGPSKALERKPYPPGQHGQSRRRRE. Residues 92-154 form the S4 RNA-binding domain; that stretch reads ARLDNTVFRM…SQDLEVIQTN (63 aa).

This sequence belongs to the universal ribosomal protein uS4 family. As to quaternary structure, part of the 30S ribosomal subunit. Contacts protein S5. The interaction surface between S4 and S5 is involved in control of translational fidelity.

Its function is as follows. One of the primary rRNA binding proteins, it binds directly to 16S rRNA where it nucleates assembly of the body of the 30S subunit. In terms of biological role, with S5 and S12 plays an important role in translational accuracy. This Salinibacter ruber (strain DSM 13855 / M31) protein is Small ribosomal subunit protein uS4.